A 571-amino-acid chain; its full sequence is Septation ring formation regulator EzrA (571 aa).

The Extracellular portion of the chain corresponds to 1–3; that stretch reads MYY. Residues 4–22 form a helical membrane-spanning segment; that stretch reads MLIGFIIVVIAVIGAGYIL. The Cytoplasmic segment spans residues 23–571; sequence KRKHYQRINE…ESKVSVDDIE (549 aa). Coiled coils occupy residues 248–298, 326–374, 400–437, and 478–529; these read LAQM…DTLE, DALA…ASGE, KFAE…ERER, and RIAE…ENHF.

The protein belongs to the EzrA family.

The protein resides in the cell membrane. Negative regulator of FtsZ ring formation; modulates the frequency and position of FtsZ ring formation. Inhibits FtsZ ring formation at polar sites. Interacts either with FtsZ or with one of its binding partners to promote depolymerization. This chain is Septation ring formation regulator EzrA, found in Listeria monocytogenes serovar 1/2a (strain ATCC BAA-679 / EGD-e).